A 226-amino-acid polypeptide reads, in one-letter code: uncharacterized protein (226 aa).

A helical membrane pass occupies residues 121 to 141 (YLIGNIIGLPLTIPFILIPLI).

This sequence to yeast YDL183c.

The protein resides in the membrane. This is an uncharacterized protein from Schizosaccharomyces pombe (strain 972 / ATCC 24843) (Fission yeast).